We begin with the raw amino-acid sequence, 587 residues long: Protein POF1B (587 aa).

Residues 331 to 529 (STFSNIREEL…EELSKLRQEI (199 aa)) adopt a coiled-coil conformation.

Interacts with nonmuscle actin. Expression absent in adult ovary.

It localises to the cell junction. The protein resides in the tight junction. Plays a key role in the organization of epithelial monolayers by regulating the actin cytoskeleton. May be involved in ovary development. The polypeptide is Protein POF1B (Pof1b) (Mus musculus (Mouse)).